Reading from the N-terminus, the 702-residue chain is Polyribonucleotide nucleotidyltransferase (702 aa).

Mg(2+) contacts are provided by aspartate 485 and aspartate 491. The region spanning 552–612 is the KH domain; the sequence is PRTEIICIDP…EGVKKAISII (61 aa). The region spanning 622-690 is the S1 motif domain; that stretch reads GEIYLGKVTK…NQGRINLSRK (69 aa).

Belongs to the polyribonucleotide nucleotidyltransferase family. The cofactor is Mg(2+).

It is found in the cytoplasm. The enzyme catalyses RNA(n+1) + phosphate = RNA(n) + a ribonucleoside 5'-diphosphate. In terms of biological role, involved in mRNA degradation. Catalyzes the phosphorolysis of single-stranded polyribonucleotides processively in the 3'- to 5'-direction. This Clostridium botulinum (strain ATCC 19397 / Type A) protein is Polyribonucleotide nucleotidyltransferase.